The primary structure comprises 971 residues: Exportin-2 (971 aa).

An Importin N-terminal domain is found at 29 to 102 (AEKYLESVEG…KSSIINLMLR (74 aa)).

It belongs to the XPO2/CSE1 family.

Its subcellular location is the cytoplasm. It localises to the nucleus. In terms of biological role, export receptor for importin alpha. Mediates importin-alpha re-export from the nucleus to the cytoplasm after import substrates have been released into the nucleoplasm. The protein is Exportin-2 (cse1l) of Xenopus laevis (African clawed frog).